Reading from the N-terminus, the 1111-residue chain is Protein STU1 (1111 aa).

HEAT repeat units lie at residues 95–133 (ALPLIVEKLGDQKEKFRQLASQALATLYKVAPVEVERSV) and 167–205 (YVPTMMELLEDADGMVRDVAKSTVIELFRNAPGPAKSDL). 2 disordered regions span residues 225 to 245 (ELNPTSSAPASQPDPESVEPS) and 476 to 751 (RLLQ…VDEE). A compositionally biased stretch (polar residues) spans 502–511 (SKSTMGTSKP). Residues 704-714 (PREEQRFVKPV) show a composition bias toward basic and acidic residues.

The protein belongs to the CLASP family. As to quaternary structure, interacts with microtubules.

The protein localises to the cytoplasm. The protein resides in the cytoskeleton. It localises to the nucleus. Its subcellular location is the spindle. Its function is as follows. Microtubule binding protein that promotes the stabilization of dynamic microtubules. Required for mitotic spindle formation. The sequence is that of Protein STU1 (STU1) from Chaetomium globosum (strain ATCC 6205 / CBS 148.51 / DSM 1962 / NBRC 6347 / NRRL 1970) (Soil fungus).